Reading from the N-terminus, the 155-residue chain is FHA domain-containing protein FhaB (155 aa).

Residues 6 to 28 (LQLTRVGFLLLLWLFIWSVLRIL) traverse the membrane as a helical segment. A Phosphothreonine modification is found at threonine 36. Residues 83-132 (VLIGRADDSTLVLTDDYASTRHARLSPRGSEWYVEDLGSTNGTYLDRAKV) form the FHA domain.

Phosphorylated by PknB. Dephosphorylated by PstP.

The protein localises to the cell membrane. The polypeptide is FHA domain-containing protein FhaB (fhaB) (Mycolicibacterium smegmatis (strain ATCC 700084 / mc(2)155) (Mycobacterium smegmatis)).